A 131-amino-acid polypeptide reads, in one-letter code: Profilin-5 (131 aa).

A disulfide bond links Cys-13 and Cys-115. Residues 81–97 (VVIRGKKGTGGITIKKT) carry the Involved in PIP2 interaction motif. Thr-111 is subject to Phosphothreonine.

The protein belongs to the profilin family. As to quaternary structure, multimer. Occurs in many kinds of cells as a complex with monomeric actin in a 1:1 ratio. Phosphorylated by MAP kinases. In terms of tissue distribution, expressed in vegetative tissues. Present in shoots, roots and coleoptiles. Also detected in endosperm and pollen.

It localises to the cytoplasm. The protein localises to the cytoskeleton. With respect to regulation, actin binding is enhanced by calcium Ca(2+). Functionally, binds to actin and affects the structure of the cytoskeleton. At high concentrations, profilin prevents the polymerization of actin, whereas it enhances it at low concentrations. By binding to PIP2, it inhibits the formation of IP3 and DG. Has a high affinity for poly-proline. The sequence is that of Profilin-5 from Zea mays (Maize).